A 256-amino-acid chain; its full sequence is Cysteine-rich repeat secretory protein 29 (256 aa).

The signal sequence occupies residues 1–26 (MSSVFGSVHILAMIAIQLLLIHSVSS). 2 Gnk2-homologous domains span residues 33-136 (YLHH…SVAS) and 142-253 (YEND…LYPF).

Belongs to the cysteine-rich repeat secretory protein family.

The protein resides in the secreted. The polypeptide is Cysteine-rich repeat secretory protein 29 (CRRSP29) (Arabidopsis thaliana (Mouse-ear cress)).